A 152-amino-acid polypeptide reads, in one-letter code: Protein Smg homolog (152 aa).

This sequence belongs to the Smg family.

The chain is Protein Smg homolog from Nitrosomonas eutropha (strain DSM 101675 / C91 / Nm57).